Reading from the N-terminus, the 344-residue chain is MTADISLRPADHPAVKSGKVGVLLVNLGTPDGTDYTSMRRYLREFLTDRRVIEWSRWKWYPILFGIVLNRRPQKVGRAYELIWNKEKNESFLRTYTRNQSELMAERLKDLDNVKVDWAMRYGTPSIASRIEALKQEGCDRIVLFPLYPQYAAATTATVNDKAFHKLLSMRWQPALRTVPDYHDDETYIDALAQSVEKHLSSLDWKPDMLIASFHGIPMSYFKQGDPYYCQCQKTGRLLRERLGLTQENFMVTFQSRFGPEEWLQPYTDKTVEKLARDGVKRIAVINPGFVSDCLETLEEIAEQAAHSFHENGGEKFAHIPCLNDSEDGMKVLEKVVRRELQGWV.

Positions 214 and 295 each coordinate Fe cation.

Belongs to the ferrochelatase family.

It localises to the cytoplasm. It carries out the reaction heme b + 2 H(+) = protoporphyrin IX + Fe(2+). Its pathway is porphyrin-containing compound metabolism; protoheme biosynthesis; protoheme from protoporphyrin-IX: step 1/1. Catalyzes the ferrous insertion into protoporphyrin IX. In Rhizobium etli (strain CIAT 652), this protein is Ferrochelatase.